Here is a 68-residue protein sequence, read N- to C-terminus: Large ribosomal subunit protein uL29 (68 aa).

The protein belongs to the universal ribosomal protein uL29 family.

The polypeptide is Large ribosomal subunit protein uL29 (Prochlorococcus marinus (strain SARG / CCMP1375 / SS120)).